The primary structure comprises 284 residues: Acetylglutamate kinase (284 aa).

Residues 66-67, Arg88, and Asn179 contribute to the substrate site; that span reads GG.

Belongs to the acetylglutamate kinase family. ArgB subfamily.

It is found in the cytoplasm. The enzyme catalyses N-acetyl-L-glutamate + ATP = N-acetyl-L-glutamyl 5-phosphate + ADP. The protein operates within amino-acid biosynthesis; L-arginine biosynthesis; N(2)-acetyl-L-ornithine from L-glutamate: step 2/4. Catalyzes the ATP-dependent phosphorylation of N-acetyl-L-glutamate. The chain is Acetylglutamate kinase from Actinobacillus pleuropneumoniae serotype 5b (strain L20).